Consider the following 138-residue polypeptide: uncharacterized protein (138 aa).

A signal peptide spans 1-35; it reads MVAPAARVFLRAVRAALTSTVPDLLCLLARGSPRG.

In terms of tissue distribution, isoform 1 is highly expressed in small intestine, testis and kidney, medium expressed in brain and heart and low expressed in colon; it could not be detected in liver, adrenal gland and pancreas.

It is found in the secreted. This is an uncharacterized protein from Homo sapiens (Human).